We begin with the raw amino-acid sequence, 174 residues long: MPACRLCLLAAGLLLGLLLFTPISATGTDAEKPGECPQLEPITDCVLECTLDKDCADNRKCCQAGCSSVCSKPNGPSEGELSGTDTKLSETGTTTQSAGLDHTTKPPGGQVSTKPPAVTREGLGVREKQGTCPSVDIPKLGLCEDQCQVDSQCSGNMKCCRNGCGKMACTTPKF.

The first 25 residues, 1-25 (MPACRLCLLAAGLLLGLLLFTPISA), serve as a signal peptide directing secretion. The WAP 1 domain maps to 29–74 (DAEKPGECPQLEPITDCVLECTLDKDCADNRKCCQAGCSSVCSKPN). 4 disulfides stabilise this stretch: Cys36/Cys62, Cys45/Cys66, Cys49/Cys61, and Cys55/Cys70. The tract at residues 68–117 (SVCSKPNGPSEGELSGTDTKLSETGTTTQSAGLDHTTKPPGGQVSTKPPA) is disordered. Polar residues predominate over residues 83–98 (GTDTKLSETGTTTQSA). Residues 125–173 (VREKQGTCPSVDIPKLGLCEDQCQVDSQCSGNMKCCRNGCGKMACTTPK) enclose the WAP 2 domain. Disulfide bonds link Cys132–Cys160, Cys143–Cys164, Cys147–Cys159, and Cys153–Cys169.

As to quaternary structure, homotrimer; disulfide-linked.

The protein resides in the secreted. Its function is as follows. Broad range protease inhibitor. The sequence is that of WAP four-disulfide core domain protein 2 (Wfdc2) from Mus musculus (Mouse).